Consider the following 223-residue polypeptide: Ribose-5-phosphate isomerase A (223 aa).

Residues 28–31, 81–84, and 94–97 contribute to the substrate site; these read TGST, DGAD, and KGGG. Glutamate 103 serves as the catalytic Proton acceptor. A substrate-binding site is contributed by lysine 121.

Belongs to the ribose 5-phosphate isomerase family. Homodimer.

The catalysed reaction is aldehydo-D-ribose 5-phosphate = D-ribulose 5-phosphate. It participates in carbohydrate degradation; pentose phosphate pathway; D-ribose 5-phosphate from D-ribulose 5-phosphate (non-oxidative stage): step 1/1. Functionally, catalyzes the reversible conversion of ribose-5-phosphate to ribulose 5-phosphate. This chain is Ribose-5-phosphate isomerase A, found in Ruthia magnifica subsp. Calyptogena magnifica.